The following is a 172-amino-acid chain: Large ribosomal subunit protein uL10 (172 aa).

It belongs to the universal ribosomal protein uL10 family. In terms of assembly, part of the ribosomal stalk of the 50S ribosomal subunit. The N-terminus interacts with L11 and the large rRNA to form the base of the stalk. The C-terminus forms an elongated spine to which L12 dimers bind in a sequential fashion forming a multimeric L10(L12)X complex.

Its function is as follows. Forms part of the ribosomal stalk, playing a central role in the interaction of the ribosome with GTP-bound translation factors. This chain is Large ribosomal subunit protein uL10, found in Chelativorans sp. (strain BNC1).